The following is a 182-amino-acid chain: Heat shock protein beta-2 (182 aa).

In terms of domain architecture, sHSP spans 55–163 (PAGEGSRAGA…DTEVNEVYIS (109 aa)).

This sequence belongs to the small heat shock protein (HSP20) family. In terms of assembly, interacts with DMPK; may enhance its kinase activity. In terms of tissue distribution, expressed preferentially in skeletal muscle and heart but not in the lens.

The protein localises to the cytoplasm. Its subcellular location is the nucleus. May regulate the kinase DMPK. This is Heat shock protein beta-2 (HSPB2) from Homo sapiens (Human).